The primary structure comprises 442 residues: Probable carboxypeptidase PAAG_00768 (442 aa).

Positions Met1–Ala20 are cleaved as a signal peptide. Residue Asn102 is glycosylated (N-linked (GlcNAc...) asparagine). A Zn(2+)-binding site is contributed by Asp160. The active-site Proton acceptor is the Glu192. Zn(2+) is bound at residue Glu193. N-linked (GlcNAc...) asparagine glycosylation is present at Asn343.

This sequence belongs to the peptidase M20A family. Zn(2+) serves as cofactor.

Its subcellular location is the secreted. The chain is Probable carboxypeptidase PAAG_00768 from Paracoccidioides lutzii (strain ATCC MYA-826 / Pb01) (Paracoccidioides brasiliensis).